Reading from the N-terminus, the 294-residue chain is ATP phosphoribosyltransferase (294 aa).

Belongs to the ATP phosphoribosyltransferase family. Long subfamily. Requires Mg(2+) as cofactor.

The protein localises to the cytoplasm. It carries out the reaction 1-(5-phospho-beta-D-ribosyl)-ATP + diphosphate = 5-phospho-alpha-D-ribose 1-diphosphate + ATP. The protein operates within amino-acid biosynthesis; L-histidine biosynthesis; L-histidine from 5-phospho-alpha-D-ribose 1-diphosphate: step 1/9. Feedback inhibited by histidine. In terms of biological role, catalyzes the condensation of ATP and 5-phosphoribose 1-diphosphate to form N'-(5'-phosphoribosyl)-ATP (PR-ATP). Has a crucial role in the pathway because the rate of histidine biosynthesis seems to be controlled primarily by regulation of HisG enzymatic activity. This is ATP phosphoribosyltransferase from Chlorobium phaeobacteroides (strain DSM 266 / SMG 266 / 2430).